Here is a 745-residue protein sequence, read N- to C-terminus: Cellulose synthase-like protein E2 (745 aa).

The span at 1-14 (MAGSGGGVVSGGRQ) shows a compositional bias: gly residues. The disordered stretch occupies residues 1-20 (MAGSGGGVVSGGRQRGPPLF). Helical transmembrane passes span 29-49 (AMAA…LIWL) and 66-86 (WAWL…VLTL). Catalysis depends on residues Asp-155 and Asp-458. Helical transmembrane passes span 541 to 561 (FPTL…ISLF), 568 to 588 (WFIP…AESL), 658 to 678 (AMFV…VLGI), 686 to 706 (GPGG…IVAI), and 723 to 743 (LPAS…ILSI).

Belongs to the glycosyltransferase 2 family. Plant cellulose synthase-like E subfamily.

The protein resides in the golgi apparatus membrane. Its function is as follows. Thought to be a Golgi-localized beta-glycan synthase that polymerize the backbones of noncellulosic polysaccharides (hemicelluloses) of plant cell wall. This is Cellulose synthase-like protein E2 (CSLE2) from Oryza sativa subsp. japonica (Rice).